Here is a 440-residue protein sequence, read N- to C-terminus: 6-phospho-alpha-glucosidase (440 aa).

F4–D70 contributes to the NAD(+) binding site. R93 and N147 together coordinate substrate. Residue C169 participates in Mn(2+) binding. D170 functions as the Proton donor in the catalytic mechanism. H200 contributes to the Mn(2+) binding site. The active-site Proton acceptor is Y263. R283 contributes to the substrate binding site.

It belongs to the glycosyl hydrolase 4 family. As to quaternary structure, homodimer. NAD(+) is required as a cofactor. The cofactor is Mn(2+).

It functions in the pathway glycan degradation; palatinose degradation. Functionally, in vitro, readily hydrolyzes p-nitrophenyl-alpha-D-glucopyranoside 6-phosphate (pNPalphaG6P), a chromogenic analog of the phosphorylated isomers of sucrose. In vivo, is probably involved in the degradation of the 6-phosphate derivatives of the sucrose isomers trehalulose, turanose, maltulose and palatinose, catalyzing their hydrolysis into glucose 6-phosphate (G6P) and fructose, which allows the bacterium to use these sugars as energy sources for growth. Is not able to hydrolyze the C2 or C4 chromogenic stereomers (i.e. pNPalpha-mannopyranoside-6P and pNPalpha-galactopyranoside-6P, respectively). The sequence is that of 6-phospho-alpha-glucosidase (pagL) from Leptotrichia buccalis (strain ATCC 14201 / DSM 1135 / JCM 12969 / NCTC 10249 / C-1013-b).